Reading from the N-terminus, the 419-residue chain is Acyl-coenzyme A thioesterase 1 (419 aa).

Catalysis depends on charge relay system residues Ser-232, Asp-324, and His-358. Ser-416 is subject to Phosphoserine.

It belongs to the C/M/P thioester hydrolase family. As to quaternary structure, monomer. Expressed in heart, kidney, brown adipose tissue, white adipose tissue, adrenal gland and muscle.

It is found in the cytoplasm. Its subcellular location is the cytosol. It catalyses the reaction hexadecanoyl-CoA + H2O = hexadecanoate + CoA + H(+). It carries out the reaction decanoyl-CoA + H2O = decanoate + CoA + H(+). The catalysed reaction is dodecanoyl-CoA + H2O = dodecanoate + CoA + H(+). The enzyme catalyses tetradecanoyl-CoA + H2O = tetradecanoate + CoA + H(+). It catalyses the reaction octadecanoyl-CoA + H2O = octadecanoate + CoA + H(+). It carries out the reaction eicosanoyl-CoA + H2O = eicosanoate + CoA + H(+). The catalysed reaction is (9Z)-octadecenoyl-CoA + H2O = (9Z)-octadecenoate + CoA + H(+). The enzyme catalyses (9Z)-hexadecenoyl-CoA + H2O = (9Z)-hexadecenoate + CoA + H(+). It catalyses the reaction (9E)-octadecenoyl-CoA + H2O = (9E)-octadecenoate + CoA + H(+). It participates in lipid metabolism; fatty acid metabolism. In terms of biological role, catalyzes the hydrolysis of acyl-CoAs into free fatty acids and coenzyme A (CoASH), regulating their respective intracellular levels. More active towards saturated and unsaturated long chain fatty acyl-CoAs (C12-C20). The chain is Acyl-coenzyme A thioesterase 1 (Acot1) from Mus musculus (Mouse).